The sequence spans 206 residues: Large ribosomal subunit protein uL4 (206 aa).

The interval 63 to 97 (MYKQKGTGRARHHSARAPQFRGGGKAHGPVVRSHE) is disordered. The segment covering 64–77 (YKQKGTGRARHHSA) has biased composition (basic residues).

Belongs to the universal ribosomal protein uL4 family. As to quaternary structure, part of the 50S ribosomal subunit.

Functionally, one of the primary rRNA binding proteins, this protein initially binds near the 5'-end of the 23S rRNA. It is important during the early stages of 50S assembly. It makes multiple contacts with different domains of the 23S rRNA in the assembled 50S subunit and ribosome. Forms part of the polypeptide exit tunnel. The protein is Large ribosomal subunit protein uL4 of Rhizobium rhizogenes (strain K84 / ATCC BAA-868) (Agrobacterium radiobacter).